A 1252-amino-acid polypeptide reads, in one-letter code: LRR receptor-like serine/threonine-protein kinase GSO2 (1252 aa).

The first 22 residues, 1–22 (MQQNSVLLALFFLCFSSGLGSG), serve as a signal peptide directing secretion. Residues 23 to 876 (QPGQRDDLQT…QRSLSPKTVV (854 aa)) lie on the Extracellular side of the membrane. N-linked (GlcNAc...) asparagine glycans are attached at residues Asn-62, Asn-77, and Asn-117. LRR repeat units lie at residues 94–118 (FNNL…LSNL), 120–143 (SSLE…LGSL), 144–166 (VNLK…TFGN), 168–190 (VNLQ…RFGR), 191–215 (LVQL…IGNC), 217–239 (SLAL…LNRL), 240–263 (KNLQ…LGDL), 265–286 (SIQY…RLTE), 287–310 (LANL…EFWR), and 312–335 (NQLE…ICSN). Asn-157 carries N-linked (GlcNAc...) asparagine glycosylation. Asn-214 and Asn-229 each carry an N-linked (GlcNAc...) asparagine glycan. Asn-299 carries an N-linked (GlcNAc...) asparagine glycan. N-linked (GlcNAc...) asparagine glycosylation is present at Asn-336. LRR repeat units lie at residues 337–360 (TSLK…ISNC), 361–384 (QSLK…LFQL), 386–408 (ELTN…ISNL), 409–433 (TNLQ…GFLG), 435–456 (LEIM…IGNC), 457–480 (TRLQ…IGRL), 481–504 (KDLT…LGNC), 506–528 (QMTV…FGFL), 529–552 (TALE…LINL), 554–575 (NLTR…LCGS), 577–599 (SYLS…LGKS), 600–622 (TNLD…TFGK), 623–648 (ISEL…GLCK), 650–670 (LTHI…WLGK), 671–695 (LPLL…IFSL), 697–719 (NILT…IGNL), 720–743 (QALN…IGKL), 745–767 (KLFE…IGQL), 768–792 (QDLQ…ISTL), 793–816 (PKLE…IGDM), and 818–839 (SLGY…QFSR). N-linked (GlcNAc...) asparagine glycans are attached at residues Asn-370, Asn-394, and Asn-407. N-linked (GlcNAc...) asparagine glycosylation is present at Asn-455. Asn-538, Asn-554, Asn-559, and Asn-566 each carry an N-linked (GlcNAc...) asparagine glycan. N-linked (GlcNAc...) asparagine glycosylation is present at Asn-709. A glycan (N-linked (GlcNAc...) asparagine) is linked at Asn-780. Asn-823 is a glycosylation site (N-linked (GlcNAc...) asparagine). Residues 877–897 (IISAISSLAAIALMVLVIILF) traverse the membrane as a helical segment. The Cytoplasmic portion of the chain corresponds to 898–1252 (FKQNHDLFKK…YREMQTDTDK (355 aa)). Position 945 is a phosphothreonine (Thr-945). One can recognise a Protein kinase domain in the interval 948-1232 (LNEEFMIGSG…PSSRQASEYL (285 aa)). ATP is bound by residues 954-962 (IGSGGSGKV) and Lys-976. Residues Tyr-1024 and Tyr-1066 each carry the phosphotyrosine modification. Residue Asp-1079 is the Proton acceptor of the active site. Residue Ser-1114 is modified to Phosphoserine. 2 positions are modified to phosphotyrosine: Tyr-1124 and Tyr-1131.

Belongs to the protein kinase superfamily. Ser/Thr protein kinase family. Interacts with CIF1 and CIF2. In terms of tissue distribution, mostly expressed in siliques, seeds, developing embryos and seedlings, detected in flower buds, but not in roots, leaves or stems.

Its subcellular location is the cell membrane. The enzyme catalyses L-seryl-[protein] + ATP = O-phospho-L-seryl-[protein] + ADP + H(+). It catalyses the reaction L-threonyl-[protein] + ATP = O-phospho-L-threonyl-[protein] + ADP + H(+). Together with GSO1, receptor-like serine/threonine-kinase required during the development of the epidermal surface in embryos and cotyledons. Involved in the nuclear division phase of megagametogenesis. In coordination with GSO2, regulates root growth through control of cell division and cell fate specification. Controls seedling root growth by modulating sucrose response after germination. Receptor of the peptide hormones CIF1 and CIF2 required for contiguous Casparian strip diffusion barrier formation in roots. This is LRR receptor-like serine/threonine-protein kinase GSO2 from Arabidopsis thaliana (Mouse-ear cress).